We begin with the raw amino-acid sequence, 193 residues long: ATP-dependent Clp protease proteolytic subunit (193 aa).

The active-site Nucleophile is the S98. H123 is a catalytic residue.

Belongs to the peptidase S14 family. Fourteen ClpP subunits assemble into 2 heptameric rings which stack back to back to give a disk-like structure with a central cavity, resembling the structure of eukaryotic proteasomes.

It localises to the cytoplasm. It carries out the reaction Hydrolysis of proteins to small peptides in the presence of ATP and magnesium. alpha-casein is the usual test substrate. In the absence of ATP, only oligopeptides shorter than five residues are hydrolyzed (such as succinyl-Leu-Tyr-|-NHMec, and Leu-Tyr-Leu-|-Tyr-Trp, in which cleavage of the -Tyr-|-Leu- and -Tyr-|-Trp bonds also occurs).. In terms of biological role, cleaves peptides in various proteins in a process that requires ATP hydrolysis. Has a chymotrypsin-like activity. Plays a major role in the degradation of misfolded proteins. In Mannheimia succiniciproducens (strain KCTC 0769BP / MBEL55E), this protein is ATP-dependent Clp protease proteolytic subunit.